Reading from the N-terminus, the 811-residue chain is MRSGSRLSNYLVRLSGRVSFTQKRSLTNVKLPSNVNYERLKAAFDSDEHTLNGKNNNNEGKLFSKTALFQGQKDGSASTGLFKNSYLTSPQGLVQFSKKSKLQAQTLVDEMTRDVLTHQGKLDYIKKLDQLSDILCRTIDVAEFIRVVHDDQKWVDAAQQTHEIIFEYMNQLNTNVELYANLVKILEDKDLISQLSDEEIKVGEYLRQDFERSGIHMDPQSRDQFVSLTQEISIMGSHFNNESSSLKSDWISITSNEFSAIEDRFIQSEVMRASALYPGKKESGTYYIPLASAIPYRIMIQCGSGNLRKKMWIGLHEASDEQVQVLNHFVAYRALLAKMLGYDSYAHYQLEHKMAKKPENVLSFLTNLQENLKNSQVLKELRALSALQQGYSLLSDEELIRQIKPWDRDFLLKSFEAKKLSSTENGEKASTDTSTSTTTSTTTTDSTTTTATFSNSTDSVAIKRLCEYFSIGTVIAGLSKLFSALYNISFVVEPTVKGEVWNEKRVRKLNVLNNSNGETMGYLYLDFCSPKVFPSHFTVVCLRQLNKAESVSEHGDMVQLSKDYQLPVVALVCNFTSGNPTLLSLDQVDTIFHEMGHAMHSMIGRTQLHNLSGTRCATDFVEIPSVLMESFSKDPRVLSEIGCHYRTGEPVPINLLEQAQSQRSALEACETFVQSKMAMLDQELHSKEIVELLRQGLEAINSTEIYHQVERDLEIFADEWSTWHGKFPHLFSYGAVYYSYLLDRAIANVLWQKLFAKDPWSRDAGIKYKEEILKWGGTKDPWACLADALQMEELRKGDAHAMQIIGENSKL.

A mitochondrion-targeting transit peptide spans 1 to 25; sequence MRSGSRLSNYLVRLSGRVSFTQKRS. The interval 423–450 is disordered; sequence TENGEKASTDTSTSTTTSTTTTDSTTTT. The span at 431-450 shows a compositional bias: low complexity; the sequence is TDTSTSTTTSTTTTDSTTTT. His-593 contributes to the Zn(2+) binding site. Residue Glu-594 is part of the active site. His-597 and His-600 together coordinate Zn(2+).

Belongs to the peptidase M3 family. Zn(2+) serves as cofactor.

The protein resides in the mitochondrion matrix. It carries out the reaction Release of an N-terminal octapeptide as second stage of processing of some proteins imported into the mitochondrion.. Cleaves proteins, imported into the mitochondrion, to their mature size. While most mitochondrial precursor proteins are processed to the mature form in one step by mitochondrial processing peptidase (MPP), the sequential cleavage by MIP of an octapeptide after initial processing by MPP is a required step for a subgroup of nuclear-encoded precursor proteins destined for the matrix or the inner membrane. This is Mitochondrial intermediate peptidase (OCT1) from Lodderomyces elongisporus (strain ATCC 11503 / CBS 2605 / JCM 1781 / NBRC 1676 / NRRL YB-4239) (Yeast).